The primary structure comprises 128 residues: Small ribosomal subunit protein uS13 (128 aa).

Positions 95–118 are enriched in basic residues; that stretch reads GLPVRGQRTHTNARTRKGPKKGLV. The tract at residues 95-128 is disordered; that stretch reads GLPVRGQRTHTNARTRKGPKKGLVRKAAAPAPMA.

Belongs to the universal ribosomal protein uS13 family. As to quaternary structure, part of the 30S ribosomal subunit. Forms a loose heterodimer with protein S19. Forms two bridges to the 50S subunit in the 70S ribosome.

Its function is as follows. Located at the top of the head of the 30S subunit, it contacts several helices of the 16S rRNA. In the 70S ribosome it contacts the 23S rRNA (bridge B1a) and protein L5 of the 50S subunit (bridge B1b), connecting the 2 subunits; these bridges are implicated in subunit movement. Contacts the tRNAs in the A and P-sites. The protein is Small ribosomal subunit protein uS13 of Anaeromyxobacter dehalogenans (strain 2CP-1 / ATCC BAA-258).